The following is a 548-amino-acid chain: ATP synthase subunit alpha (548 aa).

Position 172 to 179 (172 to 179 (GDRKTGKT)) interacts with ATP. Residues 526 to 548 (AEAMDEADVEKESVKVRKPAPKK) form a disordered region.

This sequence belongs to the ATPase alpha/beta chains family. F-type ATPases have 2 components, CF(1) - the catalytic core - and CF(0) - the membrane proton channel. CF(1) has five subunits: alpha(3), beta(3), gamma(1), delta(1), epsilon(1). CF(0) has three main subunits: a(1), b(2) and c(9-12). The alpha and beta chains form an alternating ring which encloses part of the gamma chain. CF(1) is attached to CF(0) by a central stalk formed by the gamma and epsilon chains, while a peripheral stalk is formed by the delta and b chains.

The protein localises to the cell membrane. The catalysed reaction is ATP + H2O + 4 H(+)(in) = ADP + phosphate + 5 H(+)(out). Produces ATP from ADP in the presence of a proton gradient across the membrane. The alpha chain is a regulatory subunit. The sequence is that of ATP synthase subunit alpha from Mycolicibacterium vanbaalenii (strain DSM 7251 / JCM 13017 / BCRC 16820 / KCTC 9966 / NRRL B-24157 / PYR-1) (Mycobacterium vanbaalenii).